The primary structure comprises 198 residues: MIRRSSGFTLVEMLLALAILAALSVAAVTVLQNVMRADTLTRDKSGRMQALQQTFSQMAADFSQIIPRRSRDSASLFFAGRFQLGSDDGAIAFSRNGWPNPLGLLPRSEIQNVSYRLRGSQLERLNYDQQDPLPGSQPTVTIVLRDVRAFGLRFYASGRWQDEWQQAQTLPQGLEVTLTLEPYGEIRRLFLLTPGDSR.

A propeptide spans 1-7 (MIRRSSG) (leader sequence). The residue at position 8 (phenylalanine 8) is an N-methylphenylalanine. The helical transmembrane segment at 8–28 (FTLVEMLLALAILAALSVAAV) threads the bilayer.

It belongs to the GSP J family. As to quaternary structure, type II secretion is composed of four main components: the outer membrane complex, the inner membrane complex, the cytoplasmic secretion ATPase and the periplasm-spanning pseudopilus. Interacts with core component PulG. In terms of processing, cleaved by prepilin peptidase. Methylated by prepilin peptidase at the amino group of the N-terminal phenylalanine once the leader sequence is cleaved by prepilin peptidase.

Its subcellular location is the cell inner membrane. Its function is as follows. Component of the type II secretion system required for the energy-dependent secretion of extracellular factors such as proteases and toxins from the periplasm. Part of the pseudopilus tip complex that is critical for the recognition and binding of secretion substrates. This is Type II secretion system protein J (pulJ) from Klebsiella pneumoniae.